A 482-amino-acid chain; its full sequence is tRNA sulfurtransferase (482 aa).

The region spanning 61-165 (LAIRDALTRI…DDRLLLIKGR (105 aa)) is the THUMP domain. ATP contacts are provided by residues 183 to 184 (LI), lysine 265, glycine 287, and glutamine 296. Cysteine 344 and cysteine 456 are disulfide-bonded. The Rhodanese domain maps to 404 to 482 (FGPNDVILDI…GFENVKAYRP (79 aa)). Cysteine 456 (cysteine persulfide intermediate) is an active-site residue.

It belongs to the ThiI family.

Its subcellular location is the cytoplasm. It carries out the reaction [ThiI sulfur-carrier protein]-S-sulfanyl-L-cysteine + a uridine in tRNA + 2 reduced [2Fe-2S]-[ferredoxin] + ATP + H(+) = [ThiI sulfur-carrier protein]-L-cysteine + a 4-thiouridine in tRNA + 2 oxidized [2Fe-2S]-[ferredoxin] + AMP + diphosphate. It catalyses the reaction [ThiS sulfur-carrier protein]-C-terminal Gly-Gly-AMP + S-sulfanyl-L-cysteinyl-[cysteine desulfurase] + AH2 = [ThiS sulfur-carrier protein]-C-terminal-Gly-aminoethanethioate + L-cysteinyl-[cysteine desulfurase] + A + AMP + 2 H(+). It participates in cofactor biosynthesis; thiamine diphosphate biosynthesis. Catalyzes the ATP-dependent transfer of a sulfur to tRNA to produce 4-thiouridine in position 8 of tRNAs, which functions as a near-UV photosensor. Also catalyzes the transfer of sulfur to the sulfur carrier protein ThiS, forming ThiS-thiocarboxylate. This is a step in the synthesis of thiazole, in the thiamine biosynthesis pathway. The sulfur is donated as persulfide by IscS. This chain is tRNA sulfurtransferase, found in Salmonella gallinarum (strain 287/91 / NCTC 13346).